Here is a 419-residue protein sequence, read N- to C-terminus: D-amino acid dehydrogenase (419 aa).

3–17 (VLILGGGVVGVTSAY) lines the FAD pocket.

The protein belongs to the DadA oxidoreductase family. The cofactor is FAD.

The catalysed reaction is a D-alpha-amino acid + A + H2O = a 2-oxocarboxylate + AH2 + NH4(+). The protein operates within amino-acid degradation; D-alanine degradation; NH(3) and pyruvate from D-alanine: step 1/1. In terms of biological role, oxidative deamination of D-amino acids. The sequence is that of D-amino acid dehydrogenase from Methylobacterium radiotolerans (strain ATCC 27329 / DSM 1819 / JCM 2831 / NBRC 15690 / NCIMB 10815 / 0-1).